Consider the following 388-residue polypeptide: Putative nickel insertion protein (388 aa).

Belongs to the LarC family.

This chain is Putative nickel insertion protein, found in Syntrophobacter fumaroxidans (strain DSM 10017 / MPOB).